A 321-amino-acid chain; its full sequence is ATP phosphoribosyltransferase regulatory subunit (321 aa).

The protein belongs to the class-II aminoacyl-tRNA synthetase family. HisZ subfamily. In terms of assembly, heteromultimer composed of HisG and HisZ subunits.

It is found in the cytoplasm. It functions in the pathway amino-acid biosynthesis; L-histidine biosynthesis; L-histidine from 5-phospho-alpha-D-ribose 1-diphosphate: step 1/9. Its function is as follows. Required for the first step of histidine biosynthesis. May allow the feedback regulation of ATP phosphoribosyltransferase activity by histidine. The chain is ATP phosphoribosyltransferase regulatory subunit from Thiobacillus denitrificans (strain ATCC 25259 / T1).